We begin with the raw amino-acid sequence, 171 residues long: Translationally-controlled tumor protein homolog (171 aa).

The TCTP domain occupies 1–171 (MIIYRDCISQ…FKDGLEMEKC (171 aa)).

The protein belongs to the TCTP family. Expressed by the venom gland.

It localises to the secreted. In terms of biological role, venom protein that causes edema, enhances vascular permeability and is likely related to the inflammatory activity of the venom. This Micrurus fulvius (Eastern coral snake) protein is Translationally-controlled tumor protein homolog.